The following is a 97-amino-acid chain: Coiled-coil domain-containing protein 167 (97 aa).

Residues 2–78 are a coiled coil; sequence TKKKRENLGV…LLRHENRKNT (77 aa). The chain crosses the membrane as a helical span at residues 78–95; sequence TLLSVAIFTVFALLYAYW.

It localises to the membrane. The protein is Coiled-coil domain-containing protein 167 (Ccdc167) of Mus musculus (Mouse).